Reading from the N-terminus, the 260-residue chain is Aspartate/glutamate leucyltransferase (260 aa).

It belongs to the R-transferase family. Bpt subfamily.

It localises to the cytoplasm. The catalysed reaction is N-terminal L-glutamyl-[protein] + L-leucyl-tRNA(Leu) = N-terminal L-leucyl-L-glutamyl-[protein] + tRNA(Leu) + H(+). The enzyme catalyses N-terminal L-aspartyl-[protein] + L-leucyl-tRNA(Leu) = N-terminal L-leucyl-L-aspartyl-[protein] + tRNA(Leu) + H(+). Functions in the N-end rule pathway of protein degradation where it conjugates Leu from its aminoacyl-tRNA to the N-termini of proteins containing an N-terminal aspartate or glutamate. The chain is Aspartate/glutamate leucyltransferase from Sphingomonas elodea.